Consider the following 379-residue polypeptide: Hydrogenase expression/formation protein HupD (379 aa).

Residues C36, C64, and C67 each contribute to the Fe cation site.

It belongs to the HypD family.

The sequence is that of Hydrogenase expression/formation protein HupD (hupD) from Azotobacter chroococcum mcd 1.